Consider the following 274-residue polypeptide: NH(3)-dependent NAD(+) synthetase (274 aa).

An ATP-binding site is contributed by 46–53 (GISGGQDS). Asp52 provides a ligand contact to Mg(2+). Arg140 lines the deamido-NAD(+) pocket. Thr160 serves as a coordination point for ATP. Glu165 contributes to the Mg(2+) binding site. Positions 173 and 180 each coordinate deamido-NAD(+). Lys189 and Thr211 together coordinate ATP. 260–261 (HK) serves as a coordination point for deamido-NAD(+).

Belongs to the NAD synthetase family. Homodimer.

It catalyses the reaction deamido-NAD(+) + NH4(+) + ATP = AMP + diphosphate + NAD(+) + H(+). It functions in the pathway cofactor biosynthesis; NAD(+) biosynthesis; NAD(+) from deamido-NAD(+) (ammonia route): step 1/1. In terms of biological role, catalyzes the ATP-dependent amidation of deamido-NAD to form NAD. Uses ammonia as a nitrogen source. This chain is NH(3)-dependent NAD(+) synthetase, found in Streptococcus pyogenes serotype M6 (strain ATCC BAA-946 / MGAS10394).